A 297-amino-acid chain; its full sequence is Polyhedral envelope protein (297 aa).

This sequence belongs to the baculoviridae PE family.

The protein resides in the virion membrane. Major component of the polyhedra envelope. The polypeptide is Polyhedral envelope protein (Orgyia pseudotsugata (Douglas-fir tussock moth)).